Consider the following 211-residue polypeptide: Transcription factor bHLH150 (211 aa).

Residues 1–15 (MSSEQGNGSNPSTSP) show a composition bias toward polar residues. The tract at residues 1-23 (MSSEQGNGSNPSTSPEVEGTKTI) is disordered. Residues 135–184 (AIRGSGGSGRRRKLSAVGNRVRVLGGLVPGCRRTALPELLDETADYIAAL) form the bHLH domain.

Homodimer. Interacts with PRE3 and ASK7. Phosphorylated by ASK7.

It localises to the nucleus. Functionally, atypical bHLH transcription factor probably unable to bind DNA. Negatively regulates brassinosteroid signaling. This chain is Transcription factor bHLH150 (BHLH150), found in Arabidopsis thaliana (Mouse-ear cress).